The chain runs to 201 residues: CASP-like protein 2A1 (201 aa).

The disordered stretch occupies residues Met1 to Thr27. Residues Met1–Thr30 are Cytoplasmic-facing. The chain crosses the membrane as a helical span at residues Ala31 to Leu51. At Lys52 to Tyr72 the chain is on the extracellular side. Residues Leu73–Met93 form a helical membrane-spanning segment. Over Pro94–Arg101 the chain is Cytoplasmic. The helical transmembrane segment at Ala102–Val122 threads the bilayer. Over Ser123 to Lys152 the chain is Extracellular. A helical membrane pass occupies residues Ala153–Leu173. The Cytoplasmic segment spans residues Ser174–Gly201.

Belongs to the Casparian strip membrane proteins (CASP) family. As to quaternary structure, homodimer and heterodimers.

The protein localises to the cell membrane. The protein is CASP-like protein 2A1 of Populus trichocarpa (Western balsam poplar).